We begin with the raw amino-acid sequence, 91 residues long: DNA-binding protein HRL18 (91 aa).

It belongs to the bacterial histone-like protein family.

Functionally, histone-like DNA-binding protein which is capable of wrapping DNA to stabilize it, and thus to prevent its denaturation under extreme environmental conditions. The chain is DNA-binding protein HRL18 from Rhizobium leguminosarum.